Here is a 250-residue protein sequence, read N- to C-terminus: uncharacterized protein (250 aa).

Over residues 207-226 (LNDRDAINKSEEARKAREEV) the composition is skewed to basic and acidic residues. The tract at residues 207 to 250 (LNDRDAINKSEEARKAREEVFIPSEPSKPSIASKRSSASKSTKS) is disordered. The span at 233–250 (SKPSIASKRSSASKSTKS) shows a compositional bias: low complexity.

Its subcellular location is the plastid. It localises to the chloroplast. This is an uncharacterized protein from Chlorella vulgaris (Green alga).